Reading from the N-terminus, the 546-residue chain is Chaperonin GroEL (546 aa).

ATP-binding positions include 29 to 32, 86 to 90, glycine 413, 476 to 478, and aspartate 492; these read TLGP, DGTTT, and NAA. Residues 521 to 546 form a disordered region; the sequence is RPDESGNDAGAGAQGMDPSMMGGGMM.

Belongs to the chaperonin (HSP60) family. As to quaternary structure, forms a cylinder of 14 subunits composed of two heptameric rings stacked back-to-back. Interacts with the co-chaperonin GroES.

The protein resides in the cytoplasm. It catalyses the reaction ATP + H2O + a folded polypeptide = ADP + phosphate + an unfolded polypeptide.. Its function is as follows. Together with its co-chaperonin GroES, plays an essential role in assisting protein folding. The GroEL-GroES system forms a nano-cage that allows encapsulation of the non-native substrate proteins and provides a physical environment optimized to promote and accelerate protein folding. This chain is Chaperonin GroEL, found in Tetragenococcus halophilus (Pediococcus halophilus).